The primary structure comprises 387 residues: Exodeoxyribonuclease 7 large subunit (387 aa).

Belongs to the XseA family. As to quaternary structure, heterooligomer composed of large and small subunits.

It is found in the cytoplasm. The enzyme catalyses Exonucleolytic cleavage in either 5'- to 3'- or 3'- to 5'-direction to yield nucleoside 5'-phosphates.. Functionally, bidirectionally degrades single-stranded DNA into large acid-insoluble oligonucleotides, which are then degraded further into small acid-soluble oligonucleotides. In Campylobacter jejuni subsp. jejuni serotype O:23/36 (strain 81-176), this protein is Exodeoxyribonuclease 7 large subunit.